A 375-amino-acid polypeptide reads, in one-letter code: Porin Omp2b (375 aa).

Residues 1-22 (MNIKSLLLGSAAALVAASGAQA) form the signal peptide.

Belongs to the alphaproteobacteria porin family. In terms of assembly, homotrimer.

It is found in the cell outer membrane. Forms passive diffusion pores that allow small molecular weight hydrophilic materials across the outer membrane. The protein is Porin Omp2b (omp2b) of Brucella suis.